We begin with the raw amino-acid sequence, 87 residues long: Phosphoribosyl-ATP pyrophosphatase (87 aa).

The protein belongs to the PRA-PH family.

Its subcellular location is the cytoplasm. The catalysed reaction is 1-(5-phospho-beta-D-ribosyl)-ATP + H2O = 1-(5-phospho-beta-D-ribosyl)-5'-AMP + diphosphate + H(+). It functions in the pathway amino-acid biosynthesis; L-histidine biosynthesis; L-histidine from 5-phospho-alpha-D-ribose 1-diphosphate: step 2/9. The chain is Phosphoribosyl-ATP pyrophosphatase from Arthrobacter sp. (strain FB24).